We begin with the raw amino-acid sequence, 507 residues long: Desmethyl-deoxy-podophyllotoxin synthase (507 aa).

The helical transmembrane segment at 1–21 threads the bilayer; that stretch reads MEFLSFPLSSALLIILLFMLV. Cys440 is a heme binding site.

Belongs to the cytochrome P450 family. Heme serves as cofactor. In terms of tissue distribution, rhizome-specific expression.

It is found in the membrane. The catalysed reaction is (-)-deoxypodophyllotoxin + reduced [NADPH--hemoprotein reductase] + O2 = (-)-4'-desmethyl-deoxypodophyllotoxin + formaldehyde + oxidized [NADPH--hemoprotein reductase] + H2O + H(+). The protein operates within aromatic compound metabolism; phenylpropanoid biosynthesis. Functionally, cytochrome P450 involved in the biosynthesis of etoposide, a chemotherapeutic compound of the topoisomerase inhibitor family. Catalyzes the conversion of deoxypodophyllotoxin to desmethyl-deoxypodophyllotoxin. The protein is Desmethyl-deoxy-podophyllotoxin synthase of Sinopodophyllum hexandrum (Himalayan may apple).